The chain runs to 442 residues: Glutamyl-tRNA reductase (442 aa).

Residues T50–R53, S109, E114–Q116, and Q120 each bind substrate. C51 acts as the Nucleophile in catalysis. G189–A194 serves as a coordination point for NADP(+).

Belongs to the glutamyl-tRNA reductase family. Homodimer.

The enzyme catalyses (S)-4-amino-5-oxopentanoate + tRNA(Glu) + NADP(+) = L-glutamyl-tRNA(Glu) + NADPH + H(+). It functions in the pathway porphyrin-containing compound metabolism; protoporphyrin-IX biosynthesis; 5-aminolevulinate from L-glutamyl-tRNA(Glu): step 1/2. Catalyzes the NADPH-dependent reduction of glutamyl-tRNA(Glu) to glutamate 1-semialdehyde (GSA). In Nitratidesulfovibrio vulgaris (strain DSM 19637 / Miyazaki F) (Desulfovibrio vulgaris), this protein is Glutamyl-tRNA reductase.